A 98-amino-acid chain; its full sequence is Beta-2-microglobulin (98 aa).

Residues 4 to 92 form the Ig-like C1-type domain; it reads PKVQVYSRFP…HETLKEPQVY (89 aa). Cysteine 24 and cysteine 79 are disulfide-bonded.

Belongs to the beta-2-microglobulin family. In terms of assembly, heterodimer of an alpha chain and a beta chain. Beta-2-microglobulin is the beta-chain of major histocompatibility complex class I molecules.

The protein resides in the secreted. Its function is as follows. Component of the class I major histocompatibility complex (MHC). Involved in the presentation of peptide antigens to the immune system. The polypeptide is Beta-2-microglobulin (B2M) (Meleagris gallopavo (Wild turkey)).